Reading from the N-terminus, the 275-residue chain is 5'-nucleotidase SurE (275 aa).

A divalent metal cation-binding residues include aspartate 14, aspartate 15, serine 46, and asparagine 104.

The protein belongs to the SurE nucleotidase family. A divalent metal cation serves as cofactor.

The protein localises to the cytoplasm. It catalyses the reaction a ribonucleoside 5'-phosphate + H2O = a ribonucleoside + phosphate. Nucleotidase that shows phosphatase activity on nucleoside 5'-monophosphates. The protein is 5'-nucleotidase SurE of Synechocystis sp. (strain ATCC 27184 / PCC 6803 / Kazusa).